Reading from the N-terminus, the 525-residue chain is Probable protein kinase UbiB (525 aa).

Positions glutamate 118 to alanine 500 constitute a Protein kinase domain. ATP contacts are provided by residues valine 124–valine 132 and lysine 150. Catalysis depends on aspartate 285, which acts as the Proton acceptor. The chain crosses the membrane as a helical span at residues leucine 501–leucine 521.

The protein belongs to the ABC1 family. UbiB subfamily.

The protein localises to the cell inner membrane. Its pathway is cofactor biosynthesis; ubiquinone biosynthesis [regulation]. Functionally, is probably a protein kinase regulator of UbiI activity which is involved in aerobic coenzyme Q (ubiquinone) biosynthesis. This Burkholderia mallei (strain SAVP1) protein is Probable protein kinase UbiB.